The following is a 115-amino-acid chain: Putative UPF0377 protein YHL045W (115 aa).

The helical transmembrane segment at 10 to 30 threads the bilayer; the sequence is ACIFIDSVCEGIVFWGLCLFV.

This sequence belongs to the UPF0377 family.

It localises to the membrane. This is Putative UPF0377 protein YHL045W from Saccharomyces cerevisiae (strain ATCC 204508 / S288c) (Baker's yeast).